We begin with the raw amino-acid sequence, 331 residues long: L-lactate dehydrogenase A chain (331 aa).

Residues 29-57 (GMVG…MEDK) and arginine 98 each bind NAD(+). Substrate-binding residues include arginine 105, asparagine 137, and arginine 168. Asparagine 137 is an NAD(+) binding site. The Proton acceptor role is filled by histidine 192. Threonine 247 provides a ligand contact to substrate.

It belongs to the LDH/MDH superfamily. LDH family. In terms of assembly, homotetramer.

It localises to the cytoplasm. The catalysed reaction is (S)-lactate + NAD(+) = pyruvate + NADH + H(+). It participates in fermentation; pyruvate fermentation to lactate; (S)-lactate from pyruvate: step 1/1. Its function is as follows. Interconverts simultaneously and stereospecifically pyruvate and lactate with concomitant interconversion of NADH and NAD(+). The protein is L-lactate dehydrogenase A chain (ldha) of Dissostichus eleginoides (Patagonian toothfish).